Reading from the N-terminus, the 434-residue chain is Adenylosuccinate synthetase (434 aa).

Residues 22 to 28 (GDEGKGK) and 50 to 52 (GHT) each bind GTP. The active-site Proton acceptor is the D23. Residues D23 and G50 each coordinate Mg(2+). IMP is bound by residues 23 to 26 (DEGK), 48 to 51 (NAGH), T139, R153, Q234, T249, and R313. Residue H51 is the Proton donor of the active site. 309–315 (ATTGRKR) contributes to the substrate binding site. Residues R315, 341–343 (KLD), and 423–425 (SVG) contribute to the GTP site.

Belongs to the adenylosuccinate synthetase family. In terms of assembly, homodimer. It depends on Mg(2+) as a cofactor.

The protein resides in the cytoplasm. It carries out the reaction IMP + L-aspartate + GTP = N(6)-(1,2-dicarboxyethyl)-AMP + GDP + phosphate + 2 H(+). Its pathway is purine metabolism; AMP biosynthesis via de novo pathway; AMP from IMP: step 1/2. Plays an important role in the de novo pathway of purine nucleotide biosynthesis. Catalyzes the first committed step in the biosynthesis of AMP from IMP. The protein is Adenylosuccinate synthetase of Pelodictyon phaeoclathratiforme (strain DSM 5477 / BU-1).